Consider the following 174-residue polypeptide: Actin-related protein 2/3 complex subunit 3 (174 aa).

It belongs to the ARPC3 family. In terms of assembly, component of the Arp2/3 complex composed of arpB/Arp2, arpC/Arp3, arcA/p41-arc, arcB/p34-arc, arcC/p21-arc, arcD/p20-arc and arcE/p16-arc. Interacts with carmil (via the region between the LRR domain and COOH-terminal proline-rich domain); carmil is required for Arp2/3-dependent actin nucleation. Arp2/3 complex, MyoB, MyoC, and the alpha and beta subunits of capping protein all form a larger complex with carmil.

It is found in the cytoplasm. The protein resides in the cytoskeleton. Its subcellular location is the cytosol. It localises to the cell cortex. The protein localises to the cell projection. It is found in the pseudopodium. Its function is as follows. Functions as a component of the Arp2/3 complex which is involved in regulation of actin polymerization and together with an activating nucleation-promoting factor (NPF) mediates the formation of branched actin networks. Seems to contact the pointed end of the daughter actin filament. The Arp2/3 complex is involved in organizing the actin system in cell motility and chemotaxis, in phagocytosis and macropinocytosis, at late steps of endosome processing, and in mitosis. In concert with a group of other proteins, the Arp2/3 complex plays a general role in the rapid activation and adaptation of the actin system to its multiple functions. The protein is Actin-related protein 2/3 complex subunit 3 (arcC) of Dictyostelium discoideum (Social amoeba).